The primary structure comprises 107 residues: UPF0145 protein BT_3410 (107 aa).

The protein belongs to the UPF0145 family.

The chain is UPF0145 protein BT_3410 from Bacteroides thetaiotaomicron (strain ATCC 29148 / DSM 2079 / JCM 5827 / CCUG 10774 / NCTC 10582 / VPI-5482 / E50).